The chain runs to 165 residues: Hydroxyproline-rich systemin A (165 aa).

Positions 1–18 are cleaved as a signal peptide; the sequence is MRVLFLIYLILSPFGAEA. Residues 19-35 constitute a propeptide that is removed on maturation; sequence RTLLENHEGLNVGSGYG. 2 disordered regions span residues 33-70 and 142-165; these read GYGRGANLPPPSPASSPPSKEVSNSVSPTRTDEKTSEN and YWNRKPLSPPSPKPADGQRPLHSY. A 4-hydroxyproline mark is found at P42, P43, P45, P49, and P50. O-linked (Ara...) hydroxyproline glycans are attached at residues P42, P43, P45, P49, and P50. The propeptide occupies 54 to 143; sequence VSNSVSPTRT…FDSKSDERYW (90 aa). A 4-hydroxyproline mark is found at P150, P151, and P153. O-linked (Ara...) hydroxyproline glycosylation is found at P150, P151, and P153. The propeptide occupies 162–165; sequence LHSY.

In terms of processing, O-glycosylated; contains pentose side chains. In terms of tissue distribution, expressed in leaves.

The protein localises to the secreted. Functionally, activates a lipid-based signal transduction pathway in which linolenic acid is converted to jasmonic acid, a potent activator of defense gene transcription, including proteinase inhibitors. The protein is Hydroxyproline-rich systemin A of Nicotiana tabacum (Common tobacco).